Reading from the N-terminus, the 345-residue chain is Phosphoribosylformylglycinamidine cyclo-ligase (345 aa).

Belongs to the AIR synthase family.

It is found in the cytoplasm. It catalyses the reaction 2-formamido-N(1)-(5-O-phospho-beta-D-ribosyl)acetamidine + ATP = 5-amino-1-(5-phospho-beta-D-ribosyl)imidazole + ADP + phosphate + H(+). It participates in purine metabolism; IMP biosynthesis via de novo pathway; 5-amino-1-(5-phospho-D-ribosyl)imidazole from N(2)-formyl-N(1)-(5-phospho-D-ribosyl)glycinamide: step 2/2. In Anaeromyxobacter sp. (strain K), this protein is Phosphoribosylformylglycinamidine cyclo-ligase.